A 261-amino-acid chain; its full sequence is DNA repair protein RecO (261 aa).

The protein belongs to the RecO family.

Its function is as follows. Involved in DNA repair and RecF pathway recombination. The sequence is that of DNA repair protein RecO from Chlorobium limicola (strain DSM 245 / NBRC 103803 / 6330).